A 102-amino-acid polypeptide reads, in one-letter code: Small ribosomal subunit protein uS10 (102 aa).

The protein belongs to the universal ribosomal protein uS10 family. In terms of assembly, part of the 30S ribosomal subunit.

In terms of biological role, involved in the binding of tRNA to the ribosomes. The sequence is that of Small ribosomal subunit protein uS10 from Parafrankia sp. (strain EAN1pec).